We begin with the raw amino-acid sequence, 339 residues long: Inositol 2-dehydrogenase 2 (339 aa).

The protein belongs to the Gfo/Idh/MocA family. Homotetramer.

It carries out the reaction myo-inositol + NAD(+) = scyllo-inosose + NADH + H(+). Functionally, involved in the oxidation of myo-inositol (MI) to 2-keto-myo-inositol (2KMI or 2-inosose). The polypeptide is Inositol 2-dehydrogenase 2 (Saccharopolyspora erythraea (strain ATCC 11635 / DSM 40517 / JCM 4748 / NBRC 13426 / NCIMB 8594 / NRRL 2338)).